A 44-amino-acid chain; its full sequence is MRDIKTYLSVAPVLTTLWFGSLAGLLIEINRLFPDALVFPFFSF.

A helical transmembrane segment spans residues 7-27 (YLSVAPVLTTLWFGSLAGLLI).

Belongs to the PsaJ family.

Its subcellular location is the plastid. It is found in the chloroplast thylakoid membrane. May help in the organization of the PsaE and PsaF subunits. The protein is Photosystem I reaction center subunit IX of Liriodendron tulipifera (Tuliptree).